The following is an 852-amino-acid chain: 2-deoxy-glucose resistant protein 2 (852 aa).

A compositionally biased stretch (polar residues) spans methionine 1–asparagine 18. Positions methionine 1–tyrosine 60 are disordered. 6 WD repeats span residues leucine 171 to serine 210, glutamate 278 to threonine 316, valine 318 to alanine 358, glutamine 426 to lysine 471, glycine 476 to glutamate 515, and glycine 651 to lysine 689. The residue at position 716 (serine 716) is a Phosphoserine. The segment at aspartate 723–histidine 748 is disordered. Over residues phenylalanine 733–serine 744 the composition is skewed to polar residues.

The protein belongs to the WD repeat DGR2 family.

This is 2-deoxy-glucose resistant protein 2 (DGR2) from Saccharomyces cerevisiae (strain ATCC 204508 / S288c) (Baker's yeast).